A 121-amino-acid polypeptide reads, in one-letter code: Small ribosomal subunit protein uS13 (121 aa).

The interval 91–121 is disordered; it reads HRMSLPVRGQRTRTNARTRRGSRKTVAGRKK. Over residues 100-121 the composition is skewed to basic residues; that stretch reads QRTRTNARTRRGSRKTVAGRKK.

Belongs to the universal ribosomal protein uS13 family. As to quaternary structure, part of the 30S ribosomal subunit. Forms a loose heterodimer with protein S19. Forms two bridges to the 50S subunit in the 70S ribosome.

Functionally, located at the top of the head of the 30S subunit, it contacts several helices of the 16S rRNA. In the 70S ribosome it contacts the 23S rRNA (bridge B1a) and protein L5 of the 50S subunit (bridge B1b), connecting the 2 subunits; these bridges are implicated in subunit movement. Contacts the tRNAs in the A and P-sites. The sequence is that of Small ribosomal subunit protein uS13 from Prochlorococcus marinus (strain MIT 9301).